Here is a 426-residue protein sequence, read N- to C-terminus: Enolase (426 aa).

Position 163 (Gln163) interacts with (2R)-2-phosphoglycerate. The active-site Proton donor is the Glu205. Mg(2+)-binding residues include Asp242, Glu285, and Asp312. 4 residues coordinate (2R)-2-phosphoglycerate: Lys337, Arg366, Ser367, and Lys388. The Proton acceptor role is filled by Lys337.

It belongs to the enolase family. Requires Mg(2+) as cofactor.

It localises to the cytoplasm. The protein resides in the secreted. Its subcellular location is the cell surface. It carries out the reaction (2R)-2-phosphoglycerate = phosphoenolpyruvate + H2O. It participates in carbohydrate degradation; glycolysis; pyruvate from D-glyceraldehyde 3-phosphate: step 4/5. Its function is as follows. Catalyzes the reversible conversion of 2-phosphoglycerate (2-PG) into phosphoenolpyruvate (PEP). It is essential for the degradation of carbohydrates via glycolysis. This is Enolase from Gluconacetobacter diazotrophicus (strain ATCC 49037 / DSM 5601 / CCUG 37298 / CIP 103539 / LMG 7603 / PAl5).